We begin with the raw amino-acid sequence, 1168 residues long: Probable pre-mRNA-splicing factor ATP-dependent RNA helicase DEAH5 (1168 aa).

The interval 76–206 (IYPPKPKSEK…KDEYVEEDKG (131 aa)) is disordered. 2 stretches are compositionally biased toward basic and acidic residues: residues 81–172 (PKSE…DRRS) and 180–206 (GRGDGGEGEDRRRDRRAKDEYVEEDKG). One can recognise an S1 motif domain in the interval 214–283 (YQVYKGRVTR…SSDKYSLSMR (70 aa)). Residues 289–326 (TGRDLIPLRKPSDEDDSSRSNPSYRTKDGQVTKTGISG) are disordered. The residue at position 411 (serine 411) is a Phosphoserine. One can recognise a Helicase ATP-binding domain in the interval 525–688 (IQAVHDNQVL…FFNCNIFTIP (164 aa)). 538–545 (GETGSGKT) provides a ligand contact to ATP. The short motif at 635-638 (DEAH) is the DEAH box element. The Helicase C-terminal domain maps to 706 to 886 (YLDAALITVL…MTTLTMKAMG (181 aa)).

Belongs to the DEAD box helicase family. DEAH subfamily. PRP22 sub-subfamily.

It localises to the nucleus. The catalysed reaction is ATP + H2O = ADP + phosphate + H(+). Functionally, may be involved in pre-mRNA splicing. This Arabidopsis thaliana (Mouse-ear cress) protein is Probable pre-mRNA-splicing factor ATP-dependent RNA helicase DEAH5.